An 864-amino-acid chain; its full sequence is NT-3 growth factor receptor (864 aa).

Residues M1–A31 form the signal peptide. Cystine bridges form between C32/C38 and C36/C45. At C32 to T429 the chain is on the extracellular side. N-linked (GlcNAc...) asparagine glycans are attached at residues N68, N72, and N79. LRR repeat units follow at residues G104–K125 and H128–T149. N-linked (GlcNAc...) asparagine glycans are attached at residues N133 and N163. The LRRCT domain occupies N160–L209. 2 disulfides stabilise this stretch: C164/C189 and C166/C207. Residues N203, N218, N232, N259, N267, N272, and N294 are each glycosylated (N-linked (GlcNAc...) asparagine). Ig-like C2-type domains lie at P210–T300 and S309–N382. A disulfide bridge links C231 with C284. Cysteines 320 and 362 form a disulfide. N-linked (GlcNAc...) asparagine glycosylation is found at N375 and N388. A helical transmembrane segment spans residues F430–I453. Residues N454–G864 are Cytoplasmic-facing. Position 493 is a phosphoserine (S493). The residue at position 516 (Y516) is a Phosphotyrosine; by autocatalysis. The Protein kinase domain maps to I538–G853. Residues L544 to V552 and K572 each bind ATP. D679 acts as the Proton acceptor in catalysis. Y705, Y709, Y710, and Y859 each carry phosphotyrosine; by autocatalysis.

It belongs to the protein kinase superfamily. Tyr protein kinase family. Insulin receptor subfamily. Exists in a dynamic equilibrium between monomeric (low affinity) and dimeric (high affinity) structures. Binds SH2B2. Interacts with SQSTM1 and KIDINS220. Interacts with PTPRS. Interacts with MAPK8IP3/JIP3. In terms of processing, ligand-mediated auto-phosphorylation. Widely expressed, mainly in the nervous tissue.

The protein resides in the membrane. It carries out the reaction L-tyrosyl-[protein] + ATP = O-phospho-L-tyrosyl-[protein] + ADP + H(+). In terms of biological role, receptor tyrosine kinase involved in nervous system and probably heart development. Upon binding of its ligand NTF3/neurotrophin-3, NTRK3 autophosphorylates and activates different signaling pathways, including the phosphatidylinositol 3-kinase/AKT and the MAPK pathways, that control cell survival and differentiation. NTRK3 isoforms containing insertions within the kinase domain can autophosphorylate in response to NTF3/neurotrophin-3, but cannot mediate downstream phenotypic responses. This chain is NT-3 growth factor receptor (Ntrk3), found in Rattus norvegicus (Rat).